The following is a 270-amino-acid chain: uncharacterized protein (270 aa).

It is found in the virion. This is an uncharacterized protein from Acanthamoeba polyphaga (Amoeba).